Here is a 329-residue protein sequence, read N- to C-terminus: DNA repair and recombination protein RadA (329 aa).

Residue 107–114 (GEFGSGKS) participates in ATP binding.

Belongs to the eukaryotic RecA-like protein family.

Its function is as follows. Involved in DNA repair and in homologous recombination. Binds and assemble on single-stranded DNA to form a nucleoprotein filament. Hydrolyzes ATP in a ssDNA-dependent manner and promotes DNA strand exchange between homologous DNA molecules. This is DNA repair and recombination protein RadA from Methanocorpusculum labreanum (strain ATCC 43576 / DSM 4855 / Z).